The primary structure comprises 303 residues: Glycine betaine/carnitine/choline-binding protein OpuCC (303 aa).

A signal peptide spans 1 to 20 (MTKIKWLGAFALVFVMLLGG). Residue C21 is the site of N-palmitoyl cysteine attachment. Residue C21 is the site of S-diacylglycerol cysteine attachment.

The protein belongs to the OsmX family. The complex is composed of two ATP-binding proteins (OpuCA), two transmembrane proteins (OpuCB and OpuCD) and a solute-binding protein (OpuCC).

It is found in the cell membrane. In terms of biological role, member of a high affinity multicomponent binding-protein-dependent transport system for glycine betaine, carnitine, and choline. In Bacillus subtilis (strain 168), this protein is Glycine betaine/carnitine/choline-binding protein OpuCC (opuCC).